Reading from the N-terminus, the 1433-residue chain is MGARASVLTGGKLDAWEKIRLRPGGRKSYKIKHLVWASRELERFALNPDLLETAEGCQQIMRQLQPSLQTGTEEIKSLYNAVATLYCVHQRIEVKDTKEALEEVEKIQKKSQEKIQQAAMDKGNSNQVSQNYPIVQNAQGQMVHQAITPRTLNAWVKVVEEKAFSPEVIPMFSALSEGATPQDLNLMLNTVGGHQAAMQMLKDTINEEAAEWDRMHPQQAGPFPPGQIREPRGSDIAGTTSSLQEQITWMTGNPPIPVGEIYKRWIILGLNKIVRMYSPVSILDIRQGPKEPFRDYVDRFFKCLRAEQASQDVKGWMTDTLLVQNANPDCKTILRALGQGASLEEMMTACQGVGGPSHKARVLAEAMSQASGAAAAIMMQRSNFKGPRRTIKCFNCGKEGHLARNCRAPRKKGCWKCGKEGHQMKDCTERQANFFRENLAFQQGEAREFSSEQDRTNSPTCRKPRVRRGDSPLPEAGDEGKGAISLPQITLWQRPLVTVKIGGQLIEALLDTGADDTVLEEINLPGRWKPKMIGGIGGFIKVRQYDQVPIEISGKKAIGTILVGPTPINIIGRNMLTQIGCTLNFPISPIETVPVKLKPGMDGPRVKQWPLTEEKIKALTEICKEMEEEGKISKIGPENPYNTPIFAIKKKDSTKWRKLVDFRELNKRTQDFWEVQLGIPHPAGLKKKKSVTVLDVGDAYFSVPLDEDFRKYTAFTIPSINNETPGVRYQYNVLPQGWKGSPAIFQSSMTRILEPFRANNPEMVIYQYMDDLYVGSDLEIGQHRAKIEELREHLLKWGFTTPDKKHQKEPPFLWMGYELHPDKWTVQPIQLPDKESWTVNDIQKLVGKLNWASQIYPGIKVTHLCKLLRGAKALTDIVSLTAEAEMELAENREILREPVHGVYYDPSKELIAEVQKQGLDQWTYQIYQEPYKNLKTGKYAKRGSAHTNDVKQLTEVVQKIATESIVIWGKTPKFKLPIRKETWEIWWTDYWQATWIPEWEFVNTPPLVKLWYRLETEPIPGAETYYVDGAANRETKLGKAGYVTDKGKQKIITLTETTNQKAELQAIQLALQDSRSEVNIVTDSQYALGIIQAQPDRSEAELVNQIIEQLIKKEKVYLSWVPAHKGIGGNEQVDKLVSSGIRKVLFLDGIDKAQEEHERYHNNWRAMASDFNLPPIVAKEIVASCDKCQLKGEAMHGQVDCSPGIWQLDCTHLEGKIIIVAVHVASGYIEAEVIPAETGQETAYFILKLAGRWPVTVIHTDNGSNFTSAAVKAACWWANITQEFGIPYNPQSQGVVESMNKELKKIIGQVRDQAEHLKTAVQMAVFIHNFKRKGGIGGYSAGERIIDIIASDIQTKELQKQITKIQNFRVYYRDSRDPVWKGPAKLLWKGEGAVVIQDNNEIKVVPRRKAKIIRDYGKQMAGDDCVAGRQDED.

Gly2 carries N-myristoyl glycine; by host lipidation. An interaction with Gp41 region spans residues 7 to 31 (VLTGGKLDAWEKIRLRPGGRKSYKI). Positions 8-43 (LTGGKLDAWEKIRLRPGGRKSYKIKHLVWASRELER) are interaction with host CALM1. Residues 12–19 (KLDAWEKI) are interaction with host AP3D1. Positions 14-33 (DAWEKIRLRPGGRKSYKIKH) are interaction with membrane phosphatidylinositol 4,5-bisphosphate and RNA. Residues 16–22 (WEKIRLR) carry the Nuclear export signal motif. Positions 26–32 (RKSYKIK) match the Nuclear localization signal motif. The interaction with membrane phosphatidylinositol 4,5-bisphosphate stretch occupies residues 73–77 (EEIKS). Tyr132 is subject to Phosphotyrosine; by host. Residues 189 to 227 (NTVGGHQAAMQMLKDTINEEAAEWDRMHPQQAGPFPPGQ) form an interaction with human PPIA/CYPA and NUP153 region. Residues 277-363 (YSPVSILDIR…GGPSHKARVL (87 aa)) form a dimerization/Multimerization of capsid protein p24 region. 2 consecutive CCHC-type zinc fingers follow at residues 391-408 (IKCF…NCRA) and 412-429 (KGCW…DCTE). Residues 445 to 455 (EAREFSSEQDR) show a composition bias toward basic and acidic residues. The segment at 445–481 (EAREFSSEQDRTNSPTCRKPRVRRGDSPLPEAGDEGK) is disordered. The interval 487–491 (PQITL) is dimerization of protease. The Peptidase A2 domain occupies 506–575 (IEALLDTGAD…TPINIIGRNM (70 aa)). Residue Asp511 is the For protease activity; shared with dimeric partner of the active site. Dimerization of protease stretches follow at residues 535–541 (GIGGFIK) and 574–586 (NMLT…LNFP). The Reverse transcriptase domain maps to 629–819 (EGKISKIGPE…PPFLWMGYEL (191 aa)). The Mg(2+) site is built by Asp695, Asp770, and Asp771. The interval 812–820 (FLWMGYELH) is RT 'primer grip'. The Tryptophan repeat motif motif lies at 983–999 (WEIWWTDYWQATWIPEW). The RNase H type-1 domain maps to 1019–1142 (IPGAETYYVD…VDKLVSSGIR (124 aa)). Residues Asp1028, Glu1063, Asp1083, and Asp1134 each contribute to the Mg(2+) site. The segment at 1148-1189 (DGIDKAQEEHERYHNNWRAMASDFNLPPIVAKEIVASCDKCQ) adopts an Integrase-type zinc-finger fold. Zn(2+)-binding residues include His1157, His1161, Cys1185, and Cys1188. The 151-residue stretch at 1199–1349 (VDCSPGIWQL…SAGERIIDII (151 aa)) folds into the Integrase catalytic domain. Mg(2+)-binding residues include Asp1209, Asp1261, and Glu1297. The integrase-type DNA-binding region spans 1368-1415 (FRVYYRDSRDPVWKGPAKLLWKGEGAVVIQDNNEIKVVPRRKAKIIRD).

Homotrimer; further assembles as hexamers of trimers. Interacts with gp41 (via C-terminus). Interacts with host CALM1; this interaction induces a conformational change in the Matrix protein, triggering exposure of the myristate group. Interacts with host AP3D1; this interaction allows the polyprotein trafficking to multivesicular bodies during virus assembly. Part of the pre-integration complex (PIC) which is composed of viral genome, matrix protein, Vpr and integrase. In terms of assembly, homodimer; the homodimer further multimerizes as homohexamers or homopentamers. Interacts with human PPIA/CYPA; This interaction stabilizes the capsid. Interacts with human NUP153. Interacts with host PDZD8; this interaction stabilizes the capsid. Interacts with monkey TRIM5; this interaction destabilizes the capsid. As to quaternary structure, homodimer, whose active site consists of two apposed aspartic acid residues. Heterodimer of p66 RT and p51 RT (RT p66/p51). Heterodimerization of RT is essential for DNA polymerase activity. The overall folding of the subdomains is similar in p66 RT and p51 RT but the spatial arrangements of the subdomains are dramatically different. In terms of assembly, homotetramer; may further associate as a homohexadecamer. Part of the pre-integration complex (PIC) which is composed of viral genome, matrix protein, Vpr and integrase. Interacts with human SMARCB1/INI1 and human PSIP1/LEDGF isoform 1. Interacts with human KPNA3; this interaction might play a role in nuclear import of the pre-integration complex. Interacts with human NUP153; this interaction might play a role in nuclear import of the pre-integration complex. Mg(2+) serves as cofactor. Specific enzymatic cleavages by the viral protease yield mature proteins. The protease is released by autocatalytic cleavage. The polyprotein is cleaved during and after budding, this process is termed maturation. Proteolytic cleavage of p66 RT removes the RNase H domain to yield the p51 RT subunit. Nucleocapsid protein p7 might be further cleaved after virus entry. Post-translationally, tyrosine phosphorylated presumably in the virion by a host kinase. Phosphorylation is apparently not a major regulator of membrane association. In terms of processing, phosphorylated possibly by host MAPK1; this phosphorylation is necessary for Pin1-mediated virion uncoating. Methylated by host PRMT6, impairing its function by reducing RNA annealing and the initiation of reverse transcription.

It localises to the host cell membrane. The protein resides in the host endosome. It is found in the host multivesicular body. Its subcellular location is the virion membrane. The protein localises to the host nucleus. It localises to the host cytoplasm. The protein resides in the virion. It carries out the reaction Specific for a P1 residue that is hydrophobic, and P1' variable, but often Pro.. The enzyme catalyses Endohydrolysis of RNA in RNA/DNA hybrids. Three different cleavage modes: 1. sequence-specific internal cleavage of RNA. Human immunodeficiency virus type 1 and Moloney murine leukemia virus enzymes prefer to cleave the RNA strand one nucleotide away from the RNA-DNA junction. 2. RNA 5'-end directed cleavage 13-19 nucleotides from the RNA end. 3. DNA 3'-end directed cleavage 15-20 nucleotides away from the primer terminus.. It catalyses the reaction 3'-end directed exonucleolytic cleavage of viral RNA-DNA hybrid.. The catalysed reaction is DNA(n) + a 2'-deoxyribonucleoside 5'-triphosphate = DNA(n+1) + diphosphate. Protease: The viral protease is inhibited by many synthetic protease inhibitors (PIs), such as amprenavir, atazanavir, indinavir, loprinavir, nelfinavir, ritonavir and saquinavir. Use of protease inhibitors in tritherapy regimens permit more ambitious therapeutic strategies. Reverse transcriptase/ribonuclease H: RT can be inhibited either by nucleoside RT inhibitors (NRTIs) or by non nucleoside RT inhibitors (NNRTIs). NRTIs act as chain terminators, whereas NNRTIs inhibit DNA polymerization by binding a small hydrophobic pocket near the RT active site and inducing an allosteric change in this region. Classical NRTIs are abacavir, adefovir (PMEA), didanosine (ddI), lamivudine (3TC), stavudine (d4T), tenofovir (PMPA), zalcitabine (ddC), and zidovudine (AZT). Classical NNRTIs are atevirdine (BHAP U-87201E), delavirdine, efavirenz (DMP-266), emivirine (I-EBU), and nevirapine (BI-RG-587). The tritherapies used as a basic effective treatment of AIDS associate two NRTIs and one NNRTI. Its function is as follows. Mediates, with Gag polyprotein, the essential events in virion assembly, including binding the plasma membrane, making the protein-protein interactions necessary to create spherical particles, recruiting the viral Env proteins, and packaging the genomic RNA via direct interactions with the RNA packaging sequence (Psi). Gag-Pol polyprotein may regulate its own translation, by the binding genomic RNA in the 5'-UTR. At low concentration, the polyprotein would promote translation, whereas at high concentration, the polyprotein would encapsidate genomic RNA and then shut off translation. Functionally, targets the polyprotein to the plasma membrane via a multipartite membrane-binding signal, that includes its myristoylated N-terminus. Matrix protein is part of the pre-integration complex. Implicated in the release from host cell mediated by Vpu. Binds to RNA. Forms the conical core that encapsulates the genomic RNA-nucleocapsid complex in the virion. Most core are conical, with only 7% tubular. The core is constituted by capsid protein hexamer subunits. The core is disassembled soon after virion entry. Host restriction factors such as TRIM5-alpha or TRIMCyp bind retroviral capsids and cause premature capsid disassembly, leading to blocks in reverse transcription. Capsid restriction by TRIM5 is one of the factors which restricts HIV-1 to the human species. Host PIN1 apparently facilitates the virion uncoating. On the other hand, interactions with PDZD8 or CYPA stabilize the capsid. In terms of biological role, encapsulates and protects viral dimeric unspliced genomic RNA (gRNA). Binds these RNAs through its zinc fingers. Acts as a nucleic acid chaperone which is involved in rearangement of nucleic acid secondary structure during gRNA retrotranscription. Also facilitates template switch leading to recombination. As part of the polyprotein, participates in gRNA dimerization, packaging, tRNA incorporation and virion assembly. Its function is as follows. Aspartyl protease that mediates proteolytic cleavages of Gag and Gag-Pol polyproteins during or shortly after the release of the virion from the plasma membrane. Cleavages take place as an ordered, step-wise cascade to yield mature proteins. This process is called maturation. Displays maximal activity during the budding process just prior to particle release from the cell. Also cleaves Nef and Vif, probably concomitantly with viral structural proteins on maturation of virus particles. Hydrolyzes host EIF4GI and PABP1 in order to shut off the capped cellular mRNA translation. The resulting inhibition of cellular protein synthesis serves to ensure maximal viral gene expression and to evade host immune response. Also mediates cleavage of host YTHDF3. Mediates cleavage of host CARD8, thereby activating the CARD8 inflammasome, leading to the clearance of latent HIV-1 in patient CD4(+) T-cells after viral reactivation; in contrast, HIV-1 can evade CARD8-sensing when its protease remains inactive in infected cells prior to viral budding. Functionally, multifunctional enzyme that converts the viral RNA genome into dsDNA in the cytoplasm, shortly after virus entry into the cell. This enzyme displays a DNA polymerase activity that can copy either DNA or RNA templates, and a ribonuclease H (RNase H) activity that cleaves the RNA strand of RNA-DNA heteroduplexes in a partially processive 3' to 5' endonucleasic mode. Conversion of viral genomic RNA into dsDNA requires many steps. A tRNA(3)-Lys binds to the primer-binding site (PBS) situated at the 5'-end of the viral RNA. RT uses the 3' end of the tRNA primer to perform a short round of RNA-dependent minus-strand DNA synthesis. The reading proceeds through the U5 region and ends after the repeated (R) region which is present at both ends of viral RNA. The portion of the RNA-DNA heteroduplex is digested by the RNase H, resulting in a ssDNA product attached to the tRNA primer. This ssDNA/tRNA hybridizes with the identical R region situated at the 3' end of viral RNA. This template exchange, known as minus-strand DNA strong stop transfer, can be either intra- or intermolecular. RT uses the 3' end of this newly synthesized short ssDNA to perform the RNA-dependent minus-strand DNA synthesis of the whole template. RNase H digests the RNA template except for two polypurine tracts (PPTs) situated at the 5'-end and near the center of the genome. It is not clear if both polymerase and RNase H activities are simultaneous. RNase H probably can proceed both in a polymerase-dependent (RNA cut into small fragments by the same RT performing DNA synthesis) and a polymerase-independent mode (cleavage of remaining RNA fragments by free RTs). Secondly, RT performs DNA-directed plus-strand DNA synthesis using the PPTs that have not been removed by RNase H as primers. PPTs and tRNA primers are then removed by RNase H. The 3' and 5' ssDNA PBS regions hybridize to form a circular dsDNA intermediate. Strand displacement synthesis by RT to the PBS and PPT ends produces a blunt ended, linear dsDNA copy of the viral genome that includes long terminal repeats (LTRs) at both ends. Catalyzes viral DNA integration into the host chromosome, by performing a series of DNA cutting and joining reactions. This enzyme activity takes place after virion entry into a cell and reverse transcription of the RNA genome in dsDNA. The first step in the integration process is 3' processing. This step requires a complex comprising the viral genome, matrix protein, Vpr and integrase. This complex is called the pre-integration complex (PIC). The integrase protein removes 2 nucleotides from each 3' end of the viral DNA, leaving recessed CA OH's at the 3' ends. In the second step, the PIC enters cell nucleus. This process is mediated through integrase and Vpr proteins, and allows the virus to infect a non dividing cell. This ability to enter the nucleus is specific of lentiviruses, other retroviruses cannot and rely on cell division to access cell chromosomes. In the third step, termed strand transfer, the integrase protein joins the previously processed 3' ends to the 5' ends of strands of target cellular DNA at the site of integration. The 5'-ends are produced by integrase-catalyzed staggered cuts, 5 bp apart. A Y-shaped, gapped, recombination intermediate results, with the 5'-ends of the viral DNA strands and the 3' ends of target DNA strands remaining unjoined, flanking a gap of 5 bp. The last step is viral DNA integration into host chromosome. This involves host DNA repair synthesis in which the 5 bp gaps between the unjoined strands are filled in and then ligated. Since this process occurs at both cuts flanking the HIV genome, a 5 bp duplication of host DNA is produced at the ends of HIV-1 integration. Alternatively, Integrase may catalyze the excision of viral DNA just after strand transfer, this is termed disintegration. This Human immunodeficiency virus type 1 group M subtype G (isolate SE6165) (HIV-1) protein is Gag-Pol polyprotein (gag-pol).